The sequence spans 308 residues: Ribosomal RNA large subunit methyltransferase F (308 aa).

Belongs to the methyltransferase superfamily. METTL16/RlmF family.

It is found in the cytoplasm. The enzyme catalyses adenosine(1618) in 23S rRNA + S-adenosyl-L-methionine = N(6)-methyladenosine(1618) in 23S rRNA + S-adenosyl-L-homocysteine + H(+). Functionally, specifically methylates the adenine in position 1618 of 23S rRNA. The sequence is that of Ribosomal RNA large subunit methyltransferase F from Escherichia fergusonii (strain ATCC 35469 / DSM 13698 / CCUG 18766 / IAM 14443 / JCM 21226 / LMG 7866 / NBRC 102419 / NCTC 12128 / CDC 0568-73).